The following is a 200-amino-acid chain: Probable molybdenum cofactor guanylyltransferase (200 aa).

Residues 9–11, Lys-21, Asp-69, and Asp-100 contribute to the GTP site; that span reads LAG. Asp-100 contributes to the Mg(2+) binding site.

This sequence belongs to the MobA family. Mg(2+) serves as cofactor.

Its subcellular location is the cytoplasm. The catalysed reaction is Mo-molybdopterin + GTP + H(+) = Mo-molybdopterin guanine dinucleotide + diphosphate. Transfers a GMP moiety from GTP to Mo-molybdopterin (Mo-MPT) cofactor (Moco or molybdenum cofactor) to form Mo-molybdopterin guanine dinucleotide (Mo-MGD) cofactor. In Bacillus cereus (strain AH187), this protein is Probable molybdenum cofactor guanylyltransferase.